A 299-amino-acid polypeptide reads, in one-letter code: MERQLDAYCEHLRSERQVSPHTLSAYRRDLDKVLGWCIKQNIGSWQALDIQRLRSLIARLHAQGQSSRSLARLLSAVRGLYHYLNRECLCDHDPATGLAPPKGERRLPKTLDTDRALQLLEGAVEDDFLARRDQAILELFYSSGLRLSELTGLNLDQLDLADGMVQVLGKGSKTRLLPVGKKAREALEQWLPLRALTNPSDDAVFVSQQGRRLGPRAIQVRVKLAGERELGQNLHPHMLRHSFASHLLESSQDLRAVQELLGHSDIKTTQIYTHLDFQHLAAVYDSAHPRAKRMKGDDS.

Residues 1-85 (MERQLDAYCE…AVRGLYHYLN (85 aa)) enclose the Core-binding (CB) domain. The region spanning 106-285 (RLPKTLDTDR…DFQHLAAVYD (180 aa)) is the Tyr recombinase domain. Active-site residues include Arg-146, Lys-170, His-237, Arg-240, and His-263. The O-(3'-phospho-DNA)-tyrosine intermediate role is filled by Tyr-272.

The protein belongs to the 'phage' integrase family. XerC subfamily. As to quaternary structure, forms a cyclic heterotetrameric complex composed of two molecules of XerC and two molecules of XerD.

The protein localises to the cytoplasm. Functionally, site-specific tyrosine recombinase, which acts by catalyzing the cutting and rejoining of the recombining DNA molecules. The XerC-XerD complex is essential to convert dimers of the bacterial chromosome into monomers to permit their segregation at cell division. It also contributes to the segregational stability of plasmids. The polypeptide is Tyrosine recombinase XerC (Pseudomonas fluorescens (strain Pf0-1)).